A 271-amino-acid chain; its full sequence is Orotidine 5'-phosphate decarboxylase (271 aa).

Lys-97 serves as the catalytic Proton donor.

Belongs to the OMP decarboxylase family. Type 2 subfamily.

It catalyses the reaction orotidine 5'-phosphate + H(+) = UMP + CO2. It participates in pyrimidine metabolism; UMP biosynthesis via de novo pathway; UMP from orotate: step 2/2. The chain is Orotidine 5'-phosphate decarboxylase from Leptospira borgpetersenii serovar Hardjo-bovis (strain L550).